Here is a 369-residue protein sequence, read N- to C-terminus: Superinfection exclusion protein (369 aa).

A signal peptide spans 1–15 (MIALLILSLTCSVST).

It belongs to the serpin family. Orthopoxvirus OPG040 subfamily. Interacts with A56 protein.

The protein localises to the virion membrane. The protein resides in the host cell membrane. Functionally, prevents cell to cell fusion via its interaction with A56 protein. The A56-K2 complex associates with components of the entry fusion complex (EFC) presumably to avoid superinfection and syncytium formation. This is Superinfection exclusion protein (OPG040) from Vaccinia virus (strain Copenhagen) (VACV).